A 69-amino-acid chain; its full sequence is MIDTLQARLDEVEAHAAHQDKAVDDLNAVILDQREELDRLTRRVNVMLTRLEALEAAAPGPEVTKPPHY.

Belongs to the SlyX family.

This is Protein SlyX homolog from Maricaulis maris (strain MCS10) (Caulobacter maris).